Consider the following 38-residue polypeptide: Photosystem II reaction center protein L (38 aa).

A helical transmembrane segment spans residues 17-37 (SLYWGLLLIFVLAVSFSNYFF).

This sequence belongs to the PsbL family. PSII is composed of 1 copy each of membrane proteins PsbA, PsbB, PsbC, PsbD, PsbE, PsbF, PsbH, PsbI, PsbJ, PsbK, PsbL, PsbM, PsbT, PsbX, PsbY, PsbZ, Psb30/Ycf12, at least 3 peripheral proteins of the oxygen-evolving complex and a large number of cofactors. It forms dimeric complexes.

The protein localises to the plastid. It localises to the chloroplast thylakoid membrane. Functionally, one of the components of the core complex of photosystem II (PSII). PSII is a light-driven water:plastoquinone oxidoreductase that uses light energy to abstract electrons from H(2)O, generating O(2) and a proton gradient subsequently used for ATP formation. It consists of a core antenna complex that captures photons, and an electron transfer chain that converts photonic excitation into a charge separation. This subunit is found at the monomer-monomer interface and is required for correct PSII assembly and/or dimerization. The protein is Photosystem II reaction center protein L of Amborella trichopoda.